The primary structure comprises 789 residues: Disintegrin and metalloproteinase domain-containing protein 1 (789 aa).

Residues 1–68 form the signal peptide; it reads MSVAASASRS…LLIFLPSTLC (68 aa). The 195-residue stretch at 238–432 folds into the Peptidase M12B domain; it reads KYVEMFVVVN…HRGACLLDRP (195 aa). Asparagine 259 carries an N-linked (GlcNAc...) asparagine glycan. 4 cysteine pairs are disulfide-bonded: cysteine 348–cysteine 427, cysteine 388–cysteine 411, cysteine 390–cysteine 396, and cysteine 497–cysteine 517. Histidine 373 is a binding site for Zn(2+). The active site involves glutamate 374. Zn(2+) contacts are provided by histidine 377 and histidine 383. N-linked (GlcNAc...) asparagine glycosylation is present at asparagine 410. The Disintegrin domain maps to 441-525; the sequence is DAHCGNGVVE…ECPANSYMQD (85 aa). Asparagine 633 carries an N-linked (GlcNAc...) asparagine glycan. The region spanning 666–700 is the EGF-like domain; sequence LQYDCHPQEMCHGNGVCNNFKHCHCDAGFSPPDCS. Intrachain disulfides connect cysteine 670/cysteine 682, cysteine 676/cysteine 688, and cysteine 690/cysteine 699. A glycan (N-linked (GlcNAc...) asparagine) is linked at asparagine 720. The helical transmembrane segment at 743 to 763 threads the bilayer; the sequence is VVVLVVPIFLIVLLCCLMLIA. The Cytoplasmic portion of the chain corresponds to 764–789; it reads YLWSEVQEAVSPGSSSTTSSSESESD.

Heterodimer with ADAM2/fertilin subunit beta.

The protein resides in the membrane. Its function is as follows. May be involved in sperm-egg fusion. The protein is Disintegrin and metalloproteinase domain-containing protein 1 (Adam1) of Rattus norvegicus (Rat).